Reading from the N-terminus, the 299-residue chain is Lymphocyte antigen 6 complex locus protein G6f (299 aa).

An N-terminal signal peptide occupies residues 1-19; that stretch reads MAVLFLLLLFLCGLPQAET. One can recognise an Ig-like V-type domain in the interval 20–124; it reads DSIQAIYVVL…YRYQNWRVYD (105 aa). Residues 20-237 are Extracellular-facing; the sequence is DSIQAIYVVL…APSADWDVAW (218 aa). Cysteines 37 and 108 form a disulfide. N-linked (GlcNAc...) asparagine glycosylation is present at Asn90. The helical transmembrane segment at 238 to 258 threads the bilayer; that stretch reads ILTLLLTVGQGFTIVVLGVML. At 259–299 the chain is on the cytoplasmic side; sequence WRQRAQGAQHRNASFPQFKPEIQVYENIHLAHLSPPAPKTR. Residue Tyr283 is modified to Phosphotyrosine.

As to quaternary structure, homodimer; disulfide-linked. Interacts with GRB2 and GRB7 in a phosphorylation-dependent manner. In terms of processing, N-glycosylated.

The protein localises to the cell membrane. Functionally, may play a role in the downstream signal transduction pathways involving GRB2 and GRB7. This is Lymphocyte antigen 6 complex locus protein G6f (LY6G6F) from Bos taurus (Bovine).